Here is a 355-residue protein sequence, read N- to C-terminus: Replication-associated protein (355 aa).

The 104-residue stretch at 11 to 114 (SHRNVNTFLT…PLAVFERGTF (104 aa)) folds into the CRESS-DNA virus Rep endonuclease domain. Residues 18-21 (FLTY) carry the RCR-1 motif. The a divalent metal cation site is built by glutamate 52, histidine 60, and histidine 62. Positions 60–62 (HLH) match the RCR-2 motif. Tyrosine 100 serves as the catalytic For DNA cleavage activity. Residues 100–103 (YILK) carry the RCR-3 motif. Residue glutamate 104 coordinates a divalent metal cation. Positions 119–128 (SSFQGNPSKG) are enriched in polar residues. Residues 119–138 (SSFQGNPSKGNSEKKPSKDE) form a disordered region. Over residues 129 to 138 (NSEKKPSKDE) the composition is skewed to basic and acidic residues. An oligomerization region spans residues 175–187 (SANKLFPEIQEEF). Position 229-236 (229-236 (GPTRTGKS)) interacts with ATP. The interval 252–270 (VDWSSYNEDAIYNIVDDIP) is transactivation. The Nuclear localization signal motif lies at 292-303 (KYGKKKKVQMKS).

The protein belongs to the geminiviridae Rep protein family. Homooligomer. Rep binds to repeated DNA motifs (iterons). Forms the O-complex, which is a Rep-DNA complex involved in the initiation of RCR. Part of the C- and V-complexes which are RepA-Rep-DNA complexes involved in the c-sense and v-sense transcription. The cofactor is Mg(2+). Mn(2+) serves as cofactor.

Its subcellular location is the host nucleus. Essential for the replication of viral ssDNA. The closed circular ssDNA genome is first converted to a superhelical dsDNA. Rep binds a specific region at the genome origin of replication. It introduces an endonucleolytic nick within the conserved sequence 5'-TAATATTAC-3' in the intergenic region of the genome present in all geminiviruses, thereby initiating the rolling circle replication (RCR). Following cleavage, binds covalently to the 5'-phosphate of DNA as a tyrosyl ester. The cleavage gives rise to a free 3'-OH that serves as a primer for the cellular DNA polymerase. The polymerase synthesizes the (+) strand DNA by rolling circle mechanism. After one round of replication, a Rep-catalyzed nucleotidyl transfer reaction releases a circular single-stranded virus genome, thereby terminating the replication. Displays origin-specific DNA cleavage, nucleotidyl transferase, ATPase and helicase activities. Acts as an inhibitor of C-sense gene transcription. This chain is Replication-associated protein, found in Maize streak virus genotype B (isolate Tas) (MSV).